The following is a 307-amino-acid chain: UDP-3-O-acyl-N-acetylglucosamine deacetylase (307 aa).

Residues histidine 78, histidine 241, and aspartate 245 each contribute to the Zn(2+) site. The active-site Proton donor is histidine 268.

The protein belongs to the LpxC family. The cofactor is Zn(2+).

The enzyme catalyses a UDP-3-O-[(3R)-3-hydroxyacyl]-N-acetyl-alpha-D-glucosamine + H2O = a UDP-3-O-[(3R)-3-hydroxyacyl]-alpha-D-glucosamine + acetate. Its pathway is glycolipid biosynthesis; lipid IV(A) biosynthesis; lipid IV(A) from (3R)-3-hydroxytetradecanoyl-[acyl-carrier-protein] and UDP-N-acetyl-alpha-D-glucosamine: step 2/6. In terms of biological role, catalyzes the hydrolysis of UDP-3-O-myristoyl-N-acetylglucosamine to form UDP-3-O-myristoylglucosamine and acetate, the committed step in lipid A biosynthesis. The chain is UDP-3-O-acyl-N-acetylglucosamine deacetylase from Polaromonas naphthalenivorans (strain CJ2).